The primary structure comprises 613 residues: Proton myo-inositol cotransporter hmit-1.2 (613 aa).

The Cytoplasmic segment spans residues 1 to 21 (MVAVEFKVSESGRPRPEKNPK). The helical transmembrane segment at 22–42 (LGFFVYLLGSAAIIGGFLFGY) threads the bilayer. Topologically, residues 43-69 (DTSVVSAAMLYVPEAPGLKPMGTVWKE) are extracellular. A helical membrane pass occupies residues 70–90 (VIVSITPGMAAVGAWFSGAGS). The Cytoplasmic portion of the chain corresponds to 91 to 96 (DRYGRK). Residues 97–117 (PIIIGSTLIFVCGAVICAVAW) form a helical membrane-spanning segment. Residues 118-119 (TK) are Extracellular-facing. Residues 120–140 (IVMLIGRIFLGVGIGFASMVV) form a helical membrane-spanning segment. Over 141 to 157 (PVYLGEASPTHVRGTLV) the chain is Cytoplasmic. The chain crosses the membrane as a helical span at residues 158-178 (SAFAMMISFGQVVANIMGGVF). Topologically, residues 179–189 (SYWEPYTIGWR) are extracellular. Residues 190–210 (LMFAFAGIPALIQFVCFIFLP) form a helical membrane-spanning segment. Over 211–279 (ETPRWLYENG…RILKTPHVLK (69 aa)) the chain is Cytoplasmic. A helical membrane pass occupies residues 280 to 300 (ACFIGSMLQAFQQLAGINTIL). The Extracellular segment spans residues 301–317 (YYTADIIRSAGIENYHT). The chain crosses the membrane as a helical span at residues 318-338 (IIWISVILSICNLIGPFAPMF). The Cytoplasmic segment spans residues 339-347 (FIEKLGRRK). Residues 348-368 (LFLFSCAGVVVSLVLIGVSFL) form a helical membrane-spanning segment. Residues 369–472 (LVGNDSAPNF…QKHHCTTSYT (104 aa)) lie on the Extracellular side of the membrane. Asparagine 372, asparagine 451, and asparagine 456 each carry an N-linked (GlcNAc...) asparagine glycan. Residues 473–493 (ILPIVMMGVYLLTFSCGFTSL) form a helical membrane-spanning segment. Over 494–515 (PWVLNSEFYPMWARSTCVSIST) the chain is Cytoplasmic. The helical transmembrane segment at 516-536 (LSNWVFNLIIALTYLSLTHAI) threads the bilayer. Residues 537–539 (TKY) lie on the Extracellular side of the membrane. The helical transmembrane segment at 540–560 (GAFWLYAIFTIIAFIFIYFLV) threads the bilayer. Topologically, residues 561–613 (PETTGYSIDEVEMLFMNKRQRNIAMQARQAKLDAASDKDKNSSTSLSTETITM) are cytoplasmic. The interval 594–613 (AASDKDKNSSTSLSTETITM) is disordered. Over residues 602-613 (SSTSLSTETITM) the composition is skewed to polar residues.

Belongs to the major facilitator superfamily. Sugar transporter (TC 2.A.1.1) family. Expressed in the excretory canal cell and in pairs of amphid and sheath glia.

The protein resides in the cell membrane. Its subcellular location is the perikaryon. The enzyme catalyses myo-inositol(out) + H(+)(out) = myo-inositol(in) + H(+)(in). Functionally, h(+)-myo-inositol cotransporter. Probably by promoting the transport of myo-inositol regulates intracellular osmosis in response to hyperosmotic stress. This is Proton myo-inositol cotransporter hmit-1.2 from Caenorhabditis elegans.